The sequence spans 310 residues: Methionyl-tRNA formyltransferase (310 aa).

Residue 114–117 (SLLP) coordinates (6S)-5,6,7,8-tetrahydrofolate.

It belongs to the Fmt family.

It catalyses the reaction L-methionyl-tRNA(fMet) + (6R)-10-formyltetrahydrofolate = N-formyl-L-methionyl-tRNA(fMet) + (6S)-5,6,7,8-tetrahydrofolate + H(+). Attaches a formyl group to the free amino group of methionyl-tRNA(fMet). The formyl group appears to play a dual role in the initiator identity of N-formylmethionyl-tRNA by promoting its recognition by IF2 and preventing the misappropriation of this tRNA by the elongation apparatus. This is Methionyl-tRNA formyltransferase from Granulibacter bethesdensis (strain ATCC BAA-1260 / CGDNIH1).